Reading from the N-terminus, the 155-residue chain is Endoribonuclease YbeY (155 aa).

Histidine 110, histidine 114, and histidine 120 together coordinate Zn(2+).

It belongs to the endoribonuclease YbeY family. The cofactor is Zn(2+).

It is found in the cytoplasm. Single strand-specific metallo-endoribonuclease involved in late-stage 70S ribosome quality control and in maturation of the 3' terminus of the 16S rRNA. This chain is Endoribonuclease YbeY, found in Deinococcus geothermalis (strain DSM 11300 / CIP 105573 / AG-3a).